The following is a 581-amino-acid chain: Chaotic nuclear migration protein 67 (581 aa).

Phosphoserine occurs at positions 17, 20, 72, 85, and 89. Positions 86 to 150 (YQESPGLQER…PTDEHTSPDI (65 aa)) are disordered. Basic and acidic residues predominate over residues 94-114 (ERPKNEKDKSPIGTDVHKKDV). Position 151 is a phosphoserine (Ser-151). Coiled-coil stretches lie at residues 179 to 252 (LGYQ…DTIQ), 306 to 363 (FLCA…LSKQ), and 373 to 451 (KLTI…NTSE).

In terms of assembly, interacts directly with ADY3 and YOR129C. Interacts with ADY4. Probable component of a SPB complex composed of ADY3, SSP1, DON1, MPC54, SPO21/MPC70, NUD1 and CNM67. Phosphorylated in its N-terminal part.

Its subcellular location is the cytoplasm. The protein resides in the cytoskeleton. The protein localises to the microtubule organizing center. It localises to the spindle pole body. Functionally, involved in the pathway that organizes the shaping and sizing of the prospore membrane (PSM) during sporulation. Required for the proper formation of the spindle pole body (SPB) outer plaque. May connect the outer plaque to the central plaque embedded in the nuclear envelope. The polypeptide is Chaotic nuclear migration protein 67 (CNM67) (Saccharomyces cerevisiae (strain ATCC 204508 / S288c) (Baker's yeast)).